The sequence spans 632 residues: MAHETMSFQAEVKQLLHLMIHSLYSNKEIFLRELVSNASDAADKLRFEGLADNALYENDPNLRIRIGYDKAARTITIDDNGIGMSRDEAIANLGTIARSGTKEFFTKLSGDQQKDAALIGQFGVGFYSGFIVADKITVETRRAGLPANEAVRWESAGEGDFTIDAIERAQRGTTITLHLREGEDDLLSSHRLKSIIQKYSDHIALPILMRKEEWDQEKGEMVLKDEDETVNQASALWTRSKSDVTDEQYTQFYQHIAHDHQDPLTWTHNRVEGRSEYTQLLFVPAHAPFDLWNRDYRGGLKLYVKRVFIMDDAEQLLPQYLRFVKGVVDSADLPLNVSREILQESRDVKAIREGVTKRALSMLEELANAEDDAGKEKYKTFWGAFGQVLKEGLGEDHANRERIAKLLRFASTHGDTDAQDVSLADYVSRMKPEQSKIYYVTADTWQAAKNSPHLEVFRKKGVEVLLLTDRVDEWMLSFLHEFDGKPLASVARGDLDLGELNDEEKKAQEQAGEAIKPVVEKMKEALGDKVKEVRVTFRLTDSPSCLVADDNDMSGYLQRMLKAAGQNAPAMQPILEINPEHALVKQLNADSADFGDWCHLLFDQALLAEGGMLDDPASFVKRTNALLLSRAA.

The tract at residues 1–339 (MAHETMSFQA…SADLPLNVSR (339 aa)) is a; substrate-binding. The tract at residues 340-559 (EILQESRDVK…DNDMSGYLQR (220 aa)) is b. Positions 560-632 (MLKAAGQNAP…TNALLLSRAA (73 aa)) are c.

This sequence belongs to the heat shock protein 90 family. Homodimer.

The protein localises to the cytoplasm. Molecular chaperone. Has ATPase activity. This chain is Chaperone protein HtpG, found in Burkholderia cenocepacia (strain HI2424).